The chain runs to 953 residues: Xylosyltransferase 1 (953 aa).

Residues 1–17 (MVAAPCARRLARRSHSA) lie on the Cytoplasmic side of the membrane. Residues 18-38 (LLAALMVLLLHTLVVWNFSSL) traverse the membrane as a helical; Signal-anchor for type II membrane protein segment. The Lumenal segment spans residues 39–953 (DSGAGEQRRA…GAVKPDGRLR (915 aa)). The segment covering 48–62 (AGAAAGAAEQQQPAA) has biased composition (low complexity). Disordered regions lie at residues 48-67 (AGAAAGAAEQQQPAAPRRER) and 74-251 (LPAA…APKC). Residues 79–97 (GGPGGRAGGGGARGGGPGG) are compositionally biased toward gly residues. A compositionally biased stretch (basic and acidic residues) spans 138 to 154 (KVRTDSNNENSVPKDFE). The segment covering 156–165 (VDNSNFAPRT) has biased composition (polar residues). Composition is skewed to basic and acidic residues over residues 170–197 (HQPELAKKPPSRQKEHLQRKLDALDKRQ) and 205–216 (GPKEVLPPREKA). The N-linked (GlcNAc...) asparagine glycan is linked to asparagine 219. Intrachain disulfides connect cysteine 251–cysteine 279, cysteine 295–cysteine 536, cysteine 555–cysteine 568, and cysteine 557–cysteine 566. UDP-alpha-D-xylose is bound by residues valine 327, aspartate 355, and 384-386 (TIW). Asparagine 415 carries an N-linked (GlcNAc...) asparagine glycan. Residue 488 to 489 (DW) participates in UDP-alpha-D-xylose binding. UDP-alpha-D-xylose-binding positions include serine 569 and 592 to 593 (RK). Intrachain disulfides connect cysteine 669–cysteine 921 and cysteine 914–cysteine 927. N-linked (GlcNAc...) asparagine glycosylation occurs at asparagine 771. The segment at 933-953 (SSFSPDPKSELGAVKPDGRLR) is disordered.

Belongs to the glycosyltransferase 14 family. XylT subfamily. As to quaternary structure, monomer. A divalent metal cation is required as a cofactor. Contains 7 disulfide bonds. In terms of processing, N-glycosylated. As to expression, detected in brain, spleen, kidney and testis, and at low levels in skeletal muscle.

It is found in the golgi apparatus membrane. The enzyme catalyses UDP-alpha-D-xylose + L-seryl-[protein] = 3-O-(beta-D-xylosyl)-L-seryl-[protein] + UDP + H(+). Its pathway is glycan metabolism; chondroitin sulfate biosynthesis. It functions in the pathway glycan metabolism; heparan sulfate biosynthesis. Functionally, catalyzes the first step in the biosynthesis of chondroitin sulfate and dermatan sulfate proteoglycans, such as DCN. Transfers D-xylose from UDP-D-xylose to specific serine residues of the core protein. Required for normal maturation of chondrocytes during bone development, normal onset of ossification and normal embryonic and postnatal skeleton development, especially of the long bones. This chain is Xylosyltransferase 1 (Xylt1), found in Mus musculus (Mouse).